The primary structure comprises 357 residues: tRNA-specific 2-thiouridylase MnmA (357 aa).

ATP-binding positions include Gly-7–Ser-14 and Met-33. Cys-103 acts as the Nucleophile in catalysis. A disulfide bridge links Cys-103 with Cys-200. Gly-127 contacts ATP. The interval Lys-150–Gln-152 is interaction with tRNA. The Cysteine persulfide intermediate role is filled by Cys-200. Residues Arg-306–Tyr-307 are interaction with tRNA.

Belongs to the MnmA/TRMU family.

Its subcellular location is the cytoplasm. It catalyses the reaction S-sulfanyl-L-cysteinyl-[protein] + uridine(34) in tRNA + AH2 + ATP = 2-thiouridine(34) in tRNA + L-cysteinyl-[protein] + A + AMP + diphosphate + H(+). Catalyzes the 2-thiolation of uridine at the wobble position (U34) of tRNA, leading to the formation of s(2)U34. The polypeptide is tRNA-specific 2-thiouridylase MnmA (Lachnoclostridium phytofermentans (strain ATCC 700394 / DSM 18823 / ISDg) (Clostridium phytofermentans)).